The sequence spans 135 residues: UPF0355 protein SH2586 (135 aa).

Positions 105 to 135 (NSSHDEVEENNSAYEEIDITHYANESKGPKS) are disordered.

It belongs to the UPF0355 family.

The polypeptide is UPF0355 protein SH2586 (Staphylococcus haemolyticus (strain JCSC1435)).